The primary structure comprises 267 residues: Hydroxyacylglutathione hydrolase (267 aa).

Residues histidine 55, histidine 57, aspartate 59, histidine 60, histidine 121, aspartate 138, and histidine 176 each coordinate Zn(2+).

The protein belongs to the metallo-beta-lactamase superfamily. Glyoxalase II family. Monomer. The cofactor is Zn(2+).

The enzyme catalyses an S-(2-hydroxyacyl)glutathione + H2O = a 2-hydroxy carboxylate + glutathione + H(+). The protein operates within secondary metabolite metabolism; methylglyoxal degradation; (R)-lactate from methylglyoxal: step 2/2. In terms of biological role, thiolesterase that catalyzes the hydrolysis of S-D-lactoyl-glutathione to form glutathione and D-lactic acid. The protein is Hydroxyacylglutathione hydrolase of Shewanella sp. (strain ANA-3).